The primary structure comprises 306 residues: Tricarboxylate transporter FUM11 (306 aa).

3 Solcar repeats span residues 18 to 98, 109 to 195, and 206 to 292; these read SDTL…YQKL, FGIL…LKQV, and IGTV…VVEG. 6 helical membrane-spanning segments follow: residues 24–44, 67–87, 113–133, 170–189, 209–229, and 267–286; these read LVAG…AEFA, GLQW…KTSI, LAGF…SERI, GFWP…LGSY, VKTF…TQPL, and GAVA…FMVY.

The protein belongs to the mitochondrial carrier (TC 2.A.29) family.

It is found in the mitochondrion inner membrane. It participates in mycotoxin biosynthesis. Its function is as follows. Tricarboxylate transporter; part of the gene cluster that mediates the biosynthesis of fumonisins B1 (FB1), B2 (FB2), B3 (FB3), and B4 (FB4), which are carcinogenic mycotoxins. Within the pathway, FUM11 is involved the addition of the tricarballylic moieties to the carbon backbone. FUM11 makes a tricarboxylic acid precursor available for fumonisin biosynthesis via its export from the mitochondria. The biosynthesis starts with the FUM1-catalyzed carbon chain assembly from one molecule of acetyl-CoA, eight molecules of malonyl-CoA, and two molecules of methionine (in S-adenosyl form). The C18 polyketide chain is released from the enzyme by a nucleophilic attack of a carbanion, which is derived from R-carbon of alanine by decarboxylation, on the carbonyl carbon of polyketide acyl chain. This step is catalyzed by the pyridoxal 5'-phosphate-dependent aminoacyl transferase FUM8. The resultant 3-keto intermediate is then stereospecifically reduced to a 3-hydroxyl product by reductase FUM13. Subsequent oxidations at C-10 by the cytochrome P450 monooxygenase FUM2, C-14 and C-15 by FUM6, FUM12 or FUM15, tricarballylic esterification of the hydroxyl groups on C-14 and C-15 by acyltransferase FUM14, and C-5 hydroxylation by 2-keto-glutarate-dependent dioxygenase FUM3 furnish the biosynthesis of fumonisins. The tricarballylic moieties are most likely derived from the citric acid cycle, and their addition to the carbon backbone may involve FUM7, FUM10, FUM11 and FUM14. The polypeptide is Tricarboxylate transporter FUM11 (Gibberella moniliformis (strain M3125 / FGSC 7600) (Maize ear and stalk rot fungus)).